The chain runs to 356 residues: MKTAALFVSKEFEEEAIALVEGANYKVTSIYKLPKSPNVKFYIQYDKLQQIKNDEEISTLIIFEQLKPRHFINIRRELKGKEVLDKILLLLEIFALHAGSKEAKMQIELARLKYELPIIKETYTKSKIGEQQGPLGAGTYGVESTIKFYKRRINKLMKELESIKIFKEKSIESNKRNNIPSIGIVGYTNSGKTSLFNSLTGLTQKVDTKLFTTMSPKRYAIPINNRKIMLVDTVGFIRGIPPQIVDAFFVTLSEAKYSDALILVIDSTFSENLLIETLQSSFEILREIGVSGKPILVTLNKIDKINGDLYKKLDLVEKLSKELYSPIFDVIPISALKRTNLELLRDKIYQLATQLS.

One can recognise a Hflx-type G domain in the interval 180–356 (PSIGIVGYTN…KIYQLATQLS (177 aa)). Residues 186–193 (GYTNSGKT), 211–215 (FTTMS), 232–235 (DTVG), 300–303 (NKID), and 334–336 (SAL) each bind GTP. The Mg(2+) site is built by Thr-193 and Thr-213.

The protein belongs to the TRAFAC class OBG-HflX-like GTPase superfamily. HflX GTPase family. In terms of assembly, monomer. Associates with the 50S ribosomal subunit. Does not associate with 70S ribosomes. Mg(2+) serves as cofactor.

It localises to the cytoplasm. GTPase activity is stimulated by the presence of 50S ribosomal subunits. Hydrolysis is probably regulated by the HflX N-terminal domain. Functionally, GTPase that associates with the 50S ribosomal subunit and may have a role during protein synthesis or ribosome biogenesis. Specific for GTP. This Saccharolobus solfataricus (strain ATCC 35092 / DSM 1617 / JCM 11322 / P2) (Sulfolobus solfataricus) protein is GTPase HflX.